The chain runs to 441 residues: Ribosomal protein uS12 methylthiotransferase RimO (441 aa).

The MTTase N-terminal domain occupies proline 5 to lysine 116. Residues cysteine 14, cysteine 50, cysteine 79, cysteine 154, cysteine 158, and cysteine 161 each coordinate [4Fe-4S] cluster. Positions threonine 140–glutamine 370 constitute a Radical SAM core domain. One can recognise a TRAM domain in the interval glutamine 372–serine 438.

This sequence belongs to the methylthiotransferase family. RimO subfamily. It depends on [4Fe-4S] cluster as a cofactor.

It localises to the cytoplasm. The catalysed reaction is L-aspartate(89)-[ribosomal protein uS12]-hydrogen + (sulfur carrier)-SH + AH2 + 2 S-adenosyl-L-methionine = 3-methylsulfanyl-L-aspartate(89)-[ribosomal protein uS12]-hydrogen + (sulfur carrier)-H + 5'-deoxyadenosine + L-methionine + A + S-adenosyl-L-homocysteine + 2 H(+). Its function is as follows. Catalyzes the methylthiolation of an aspartic acid residue of ribosomal protein uS12. The polypeptide is Ribosomal protein uS12 methylthiotransferase RimO (Trichodesmium erythraeum (strain IMS101)).